We begin with the raw amino-acid sequence, 496 residues long: Glycerol kinase (496 aa).

Residue threonine 12 coordinates ADP. The ATP site is built by threonine 12, threonine 13, and serine 14. A sn-glycerol 3-phosphate-binding site is contributed by threonine 12. Arginine 16 contributes to the ADP binding site. Sn-glycerol 3-phosphate contacts are provided by arginine 82, glutamate 83, and tyrosine 134. Glycerol contacts are provided by arginine 82, glutamate 83, and tyrosine 134. The residue at position 230 (histidine 230) is a Phosphohistidine; by HPr. Aspartate 244 contacts sn-glycerol 3-phosphate. The glycerol site is built by aspartate 244 and glutamine 245. Residues threonine 266 and glycine 309 each coordinate ADP. ATP contacts are provided by threonine 266, glycine 309, glutamine 313, and glycine 410. Positions 410 and 414 each coordinate ADP.

The protein belongs to the FGGY kinase family. In terms of assembly, homotetramer and homodimer (in equilibrium). Post-translationally, the phosphoenolpyruvate-dependent sugar phosphotransferase system (PTS), including enzyme I, and histidine-containing protein (HPr) are required for the phosphorylation, which leads to the activation of the enzyme.

It catalyses the reaction glycerol + ATP = sn-glycerol 3-phosphate + ADP + H(+). It functions in the pathway polyol metabolism; glycerol degradation via glycerol kinase pathway; sn-glycerol 3-phosphate from glycerol: step 1/1. Its activity is regulated as follows. Activated by phosphorylation and inhibited by fructose 1,6-bisphosphate (FBP). Functionally, key enzyme in the regulation of glycerol uptake and metabolism. Catalyzes the phosphorylation of glycerol to yield sn-glycerol 3-phosphate. This chain is Glycerol kinase, found in Bacillus cereus (strain Q1).